The sequence spans 207 residues: Ribosomal RNA large subunit methyltransferase E (207 aa).

Residues Gly60, Trp62, Asp80, Asp96, and Asp121 each contribute to the S-adenosyl-L-methionine site. Catalysis depends on Lys161, which acts as the Proton acceptor.

The protein belongs to the class I-like SAM-binding methyltransferase superfamily. RNA methyltransferase RlmE family.

The protein resides in the cytoplasm. The catalysed reaction is uridine(2552) in 23S rRNA + S-adenosyl-L-methionine = 2'-O-methyluridine(2552) in 23S rRNA + S-adenosyl-L-homocysteine + H(+). Specifically methylates the uridine in position 2552 of 23S rRNA at the 2'-O position of the ribose in the fully assembled 50S ribosomal subunit. The chain is Ribosomal RNA large subunit methyltransferase E from Pseudomonas aeruginosa (strain UCBPP-PA14).